The following is a 611-amino-acid chain: Probable inactive purple acid phosphatase 27 (611 aa).

The signal sequence occupies residues 1 to 18; sequence MARNFLLVLLWFIVQVSS. Residues Asn263 and Asn271 are each glycosylated (N-linked (GlcNAc...) asparagine). Asp293 lines the Fe cation pocket. N-linked (GlcNAc...) asparagine glycosylation occurs at Asn314. Asp334 and Tyr337 together coordinate Fe cation. Asp334 is a Zn(2+) binding site. 3 residues coordinate Zn(2+): Asn367, His456, and His498. Position 367 (Asn367) interacts with substrate. 498 to 500 provides a ligand contact to substrate; it reads HVH. His500 contributes to the Fe cation binding site.

It belongs to the metallophosphoesterase superfamily. Purple acid phosphatase family. In terms of assembly, homodimer. It depends on Fe cation as a cofactor. The cofactor is Zn(2+). In terms of tissue distribution, expressed in roots, stems, leaves, flowers and siliques.

The protein localises to the secreted. This chain is Probable inactive purple acid phosphatase 27 (PAP27), found in Arabidopsis thaliana (Mouse-ear cress).